The chain runs to 386 residues: MNIHEYQGKEILRKYGVSVPNGKVAFTPDEAVKASEELESSVYVVKAQIHAGGRGKAGGVKIAKTKDEVKGFAEELLGKTLVTHQTGPEGREIKRLLIEEGCDIQKEYYVGLVLDRATSRIVLMASEEGGTEIEEVAEKTPEKIVKVVIDPAIGLQGYQAREVAFKINIPTKLVGQAVKFMTSLYNAFIEKDCSIAEINPLVVTGDGKVMALDAKLNFDSNALYRQKDILEYRDLDEEDPKEIEASKYDLSYISLDGNIGCMVNGAGLAMSTMDIIKHYGGDPANFLDVGGGATAEKVTEAFKIILSDQNVKGIFVNIFGGIMKCDVIAEGVVEATKQVGLTLPLVVRLEGTNVELGKKILSDSGLNITSAESMADGAEKIVSLVK.

The ATP-grasp domain maps to 9-244; sequence KEILRKYGVS…LDEEDPKEIE (236 aa). ATP is bound by residues Lys46, 53 to 55, Glu99, Cys102, and Glu107; that span reads GRG. Residues Asn199 and Asp213 each contribute to the Mg(2+) site. Substrate contacts are provided by residues Asn264 and 321–323; that span reads GIM.

It belongs to the succinate/malate CoA ligase beta subunit family. Heterotetramer of two alpha and two beta subunits. It depends on Mg(2+) as a cofactor.

It carries out the reaction succinate + ATP + CoA = succinyl-CoA + ADP + phosphate. The enzyme catalyses GTP + succinate + CoA = succinyl-CoA + GDP + phosphate. The protein operates within carbohydrate metabolism; tricarboxylic acid cycle; succinate from succinyl-CoA (ligase route): step 1/1. In terms of biological role, succinyl-CoA synthetase functions in the citric acid cycle (TCA), coupling the hydrolysis of succinyl-CoA to the synthesis of either ATP or GTP and thus represents the only step of substrate-level phosphorylation in the TCA. The beta subunit provides nucleotide specificity of the enzyme and binds the substrate succinate, while the binding sites for coenzyme A and phosphate are found in the alpha subunit. In Bacillus pumilus (strain SAFR-032), this protein is Succinate--CoA ligase [ADP-forming] subunit beta.